The primary structure comprises 303 residues: Pyridoxal 5'-phosphate synthase subunit PdxS (303 aa).

Asp33 is a D-ribose 5-phosphate binding site. Residue Lys90 is the Schiff-base intermediate with D-ribose 5-phosphate of the active site. Gly162 provides a ligand contact to D-ribose 5-phosphate. Arg174 is a D-glyceraldehyde 3-phosphate binding site. Residues Gly223 and 244–245 each bind D-ribose 5-phosphate; that span reads GS.

It belongs to the PdxS/SNZ family. As to quaternary structure, in the presence of PdxT, forms a dodecamer of heterodimers.

The catalysed reaction is aldehydo-D-ribose 5-phosphate + D-glyceraldehyde 3-phosphate + L-glutamine = pyridoxal 5'-phosphate + L-glutamate + phosphate + 3 H2O + H(+). The protein operates within cofactor biosynthesis; pyridoxal 5'-phosphate biosynthesis. Catalyzes the formation of pyridoxal 5'-phosphate from ribose 5-phosphate (RBP), glyceraldehyde 3-phosphate (G3P) and ammonia. The ammonia is provided by the PdxT subunit. Can also use ribulose 5-phosphate and dihydroxyacetone phosphate as substrates, resulting from enzyme-catalyzed isomerization of RBP and G3P, respectively. The sequence is that of Pyridoxal 5'-phosphate synthase subunit PdxS from Mycobacterium avium (strain 104).